Reading from the N-terminus, the 339-residue chain is MNIFPIVKYSVAEDSYTTDSSHINWSHYSDGGFTLSLTSGLLQIRQHEELIQSINLLDLWHQLIPGTKEKCLTLLSRAPCMNIRAFTNNVMKRFQVKFPSDVHYMKAKVEFEKLGLVFKDAKSSSEKKQFNNSQSQSNNSQELSLMNNAYNKSSAQQPNLLLQPSYIPMTQTATTAVNNSTNYVNPAPLQHVMPNAEIFSNTPPLKRFRGDAGMTQMPLRSDTSIESITASQQPTWDENVVITSSPFNPNRNAYSYGANSQYPIIAATPLNSQTQASWVAQPENQAYANLIPSPPTTSQILPTELTEEEKQLRSKVLFYLKQDSFIQLCQSLERVWNKM.

Its function is as follows. May be involved primarily in the early steps of meiotic recombination. This is Meiotic recombination protein rec7 (rec7) from Schizosaccharomyces pombe (strain 972 / ATCC 24843) (Fission yeast).